The primary structure comprises 577 residues: MRSHFCTEISEKDVGKTIKVAGWCNTYRDHGGVVFIDLRDKSGLVQLVCDPSSKAYEKALEVRSEFVLVAKGRVRLRGPGLENPKLKTGKIEIVLEELVIENKSATPPIEIGNKNVNEDLRLKYRYLDLRSLNAYEIFKLRSEVALITRNTLAQKGFLEIETPILSKTTPEGARDYLVPSRVHEGEFFALPQSPQLFKQLLMVGGMDRYFQIARCFRDEDLRADRQPEFTQIDAEMSFCDENDVMGVVEDLLQAIFKAVGHTISKPFKRMPYKEAMENYGSDKPDLRFELPLIEVGDCFRDSSNAIFSNIAKDPKNKRIKALNVKGADAVFSRSVLKELEEFVRQFGAQGLAYLQIKEDGIKGPLVKFLSEKGLKNILEKTGAQTGDIVFFGAGDKKIVLDYMGRLRLKVAETLDLIDKDALNFLWVVNFPMFEKTENGYHAAHHPFTMPKNIECEDIEEVEAHAYDVVLNGVELGGGSIRIHKEEMQKKVFEKINIHEEEAQKKFGFLLEALKFGAPPHGGFAIGFDRLIMLMTKSHSIRDVIAFPKTQKASCLLTDAPSPINEEQLRELHIRLRK.

Glu171 is an L-aspartate binding site. The aspartate stretch occupies residues 195 to 198; sequence QLFK. Arg217 lines the L-aspartate pocket. ATP contacts are provided by residues 217–219 and Gln226; that span reads RDE. L-aspartate is bound at residue His444. Residue Glu474 participates in ATP binding. Arg481 lines the L-aspartate pocket. Residue 526–529 participates in ATP binding; it reads GFDR.

Belongs to the class-II aminoacyl-tRNA synthetase family. Type 1 subfamily. As to quaternary structure, homodimer.

It localises to the cytoplasm. It catalyses the reaction tRNA(Asx) + L-aspartate + ATP = L-aspartyl-tRNA(Asx) + AMP + diphosphate. Functionally, aspartyl-tRNA synthetase with relaxed tRNA specificity since it is able to aspartylate not only its cognate tRNA(Asp) but also tRNA(Asn). Reaction proceeds in two steps: L-aspartate is first activated by ATP to form Asp-AMP and then transferred to the acceptor end of tRNA(Asp/Asn). This Helicobacter pylori (strain HPAG1) protein is Aspartate--tRNA(Asp/Asn) ligase.